We begin with the raw amino-acid sequence, 139 residues long: Fluoroacetyl-CoA thioesterase (139 aa).

Residues 40–50 (FATGFMVGLME) and Gly69 contribute to the substrate site. Active-site residues include Thr42 and Glu50. CoA is bound by residues Gly69 and 76 to 77 (HT). Residue His76 is part of the active site. Arg120 lines the substrate pocket.

Homodimer.

It carries out the reaction fluoroacetyl-CoA + H2O = fluoroacetate + CoA + H(+). Hydrolyzes fluoroacetyl-CoA before it can react with citrate synthase, and thus confers fluoroacetate resistance. Cannot use acetyl-CoA as substrate. The sequence is that of Fluoroacetyl-CoA thioesterase (flK) from Streptantibioticus cattleyicolor (Streptomyces cattleya).